Consider the following 434-residue polypeptide: MEHLDVGPLKTARGTIKLPGSKSISNRVLLLAALAQGETVVRDLLDSDDTRVMLDALGKLGVSVEGQGENAYRVTGTGGRFPNTSADLFMGNAGTAIRPLTAALALQGGEYTLHGVPRMHERPIGDLVDGLRQVGARIDYTGNEGYPPLAIHAAPVKIDAPIRVRGDVSSQFLTALLMALPLVESAGNVTIEVVGELISKPYIEITLNLMARFGVQVARDGWSSFTVPTGVAYTAPGEIFVEGDASSASYFLAAGALGGGPVRVEGVGMSSIQGDVRFADALNRMGANVMAGGNWIEVRGAERDDGKLHAVELDCNHIPDAAMTLAVAALFADGTTTLTNIASWRVKETDRLSAMATELRKLGAEVEEGADYIRVTPPSQWTPPAGGIDTYDDHRMAMAFSLAAFGPVPVRINDPRCVAKTFPEYFTAFGGITA.

The 3-phosphoshikimate site is built by lysine 22, serine 23, and arginine 27. Lysine 22 is a phosphoenolpyruvate binding site. Positions 94 and 122 each coordinate phosphoenolpyruvate. 3-phosphoshikimate is bound by residues serine 169, serine 170, glutamine 171, serine 199, aspartate 320, and lysine 347. Residue glutamine 171 participates in phosphoenolpyruvate binding. Aspartate 320 serves as the catalytic Proton acceptor. Phosphoenolpyruvate is bound by residues arginine 351, arginine 395, and lysine 420.

This sequence belongs to the EPSP synthase family. Monomer.

It localises to the cytoplasm. The enzyme catalyses 3-phosphoshikimate + phosphoenolpyruvate = 5-O-(1-carboxyvinyl)-3-phosphoshikimate + phosphate. It participates in metabolic intermediate biosynthesis; chorismate biosynthesis; chorismate from D-erythrose 4-phosphate and phosphoenolpyruvate: step 6/7. Its function is as follows. Catalyzes the transfer of the enolpyruvyl moiety of phosphoenolpyruvate (PEP) to the 5-hydroxyl of shikimate-3-phosphate (S3P) to produce enolpyruvyl shikimate-3-phosphate and inorganic phosphate. In Ralstonia pickettii (strain 12J), this protein is 3-phosphoshikimate 1-carboxyvinyltransferase.